We begin with the raw amino-acid sequence, 312 residues long: Small ribosomal subunit protein uS2 (312 aa).

Belongs to the universal ribosomal protein uS2 family. In terms of assembly, component of the small ribosomal subunit. Mature ribosomes consist of a small (40S) and a large (60S) subunit. The 40S subunit contains about 33 different proteins and 1 molecule of RNA (18S). The 60S subunit contains about 49 different proteins and 3 molecules of RNA (25S, 5.8S and 5S). Interacts with ribosomal protein S21.

Its subcellular location is the cytoplasm. Required for the assembly and/or stability of the 40S ribosomal subunit. Required for the processing of the 20S rRNA-precursor to mature 18S rRNA in a late step of the maturation of 40S ribosomal subunits. The polypeptide is Small ribosomal subunit protein uS2 (Vitis vinifera (Grape)).